We begin with the raw amino-acid sequence, 231 residues long: DNA mismatch repair protein MutH (231 aa).

This sequence belongs to the MutH family.

The protein resides in the cytoplasm. Sequence-specific endonuclease that cleaves unmethylated GATC sequences. It is involved in DNA mismatch repair. This Shewanella woodyi (strain ATCC 51908 / MS32) protein is DNA mismatch repair protein MutH.